Consider the following 226-residue polypeptide: Enolase-phosphatase E1 (226 aa).

Belongs to the HAD-like hydrolase superfamily. MasA/MtnC family. In terms of assembly, monomer. Requires Mg(2+) as cofactor.

It carries out the reaction 5-methylsulfanyl-2,3-dioxopentyl phosphate + H2O = 1,2-dihydroxy-5-(methylsulfanyl)pent-1-en-3-one + phosphate. Its pathway is amino-acid biosynthesis; L-methionine biosynthesis via salvage pathway; L-methionine from S-methyl-5-thio-alpha-D-ribose 1-phosphate: step 3/6. It participates in amino-acid biosynthesis; L-methionine biosynthesis via salvage pathway; L-methionine from S-methyl-5-thio-alpha-D-ribose 1-phosphate: step 4/6. Its function is as follows. Bifunctional enzyme that catalyzes the enolization of 2,3-diketo-5-methylthiopentyl-1-phosphate (DK-MTP-1-P) into the intermediate 2-hydroxy-3-keto-5-methylthiopentenyl-1-phosphate (HK-MTPenyl-1-P), which is then dephosphorylated to form the acireductone 1,2-dihydroxy-3-keto-5-methylthiopentene (DHK-MTPene). The chain is Enolase-phosphatase E1 from Shewanella baltica (strain OS155 / ATCC BAA-1091).